We begin with the raw amino-acid sequence, 1041 residues long: FHIP family protein GF15501 (1041 aa).

Disordered regions lie at residues 797-856 (RKGN…NKRR) and 907-987 (SNSS…SEPV). Ser-803 carries the post-translational modification Phosphoserine. Positions 808–824 (NLQQQQALNPAQQQGQQ) are enriched in low complexity. Composition is skewed to polar residues over residues 825 to 843 (RSAY…TPTS) and 907 to 933 (SNSS…LSTQ). Over residues 942–973 (SGSSSNSSMGGSSQTLSAHSNATTTHSSSTLH) the composition is skewed to low complexity.

Belongs to the FHIP family.

The protein is FHIP family protein GF15501 of Drosophila ananassae (Fruit fly).